A 252-amino-acid polypeptide reads, in one-letter code: 2-succinyl-6-hydroxy-2,4-cyclohexadiene-1-carboxylate synthase (252 aa).

The protein belongs to the AB hydrolase superfamily. MenH family. As to quaternary structure, monomer.

The catalysed reaction is 5-enolpyruvoyl-6-hydroxy-2-succinyl-cyclohex-3-ene-1-carboxylate = (1R,6R)-6-hydroxy-2-succinyl-cyclohexa-2,4-diene-1-carboxylate + pyruvate. Its pathway is quinol/quinone metabolism; 1,4-dihydroxy-2-naphthoate biosynthesis; 1,4-dihydroxy-2-naphthoate from chorismate: step 3/7. The protein operates within quinol/quinone metabolism; menaquinone biosynthesis. In terms of biological role, catalyzes a proton abstraction reaction that results in 2,5-elimination of pyruvate from 2-succinyl-5-enolpyruvyl-6-hydroxy-3-cyclohexene-1-carboxylate (SEPHCHC) and the formation of 2-succinyl-6-hydroxy-2,4-cyclohexadiene-1-carboxylate (SHCHC). The sequence is that of 2-succinyl-6-hydroxy-2,4-cyclohexadiene-1-carboxylate synthase from Escherichia fergusonii (strain ATCC 35469 / DSM 13698 / CCUG 18766 / IAM 14443 / JCM 21226 / LMG 7866 / NBRC 102419 / NCTC 12128 / CDC 0568-73).